A 293-amino-acid polypeptide reads, in one-letter code: Small ribosomal subunit protein uS2 (293 aa).

The disordered stretch occupies residues 265-293 (DGGDWAASSAPAPGGENWAEAQPAEGAKW).

This sequence belongs to the universal ribosomal protein uS2 family. In terms of assembly, component of the small ribosomal subunit. Mature ribosomes consist of a small (40S) and a large (60S) subunit. The 40S subunit contains about 33 different proteins and 1 molecule of RNA (18S). The 60S subunit contains about 49 different proteins and 3 molecules of RNA (25S, 5.8S and 5S). Interacts with rps21.

The protein resides in the cytoplasm. Required for the assembly and/or stability of the 40S ribosomal subunit. Required for the processing of the 20S rRNA-precursor to mature 18S rRNA in a late step of the maturation of 40S ribosomal subunits. The chain is Small ribosomal subunit protein uS2 (rps0) from Emericella nidulans (strain FGSC A4 / ATCC 38163 / CBS 112.46 / NRRL 194 / M139) (Aspergillus nidulans).